Reading from the N-terminus, the 795-residue chain is Delta-1-pyrroline-5-carboxylate synthase (795 aa).

The interval 1–361 (MLRHMHRSGV…FFSEVKPAGP (361 aa)) is glutamate 5-kinase. Substrate is bound by residues Ser-117, Asp-223, and Asn-246. ATP is bound by residues 266–267 (SD) and 305–311 (LGGMEAK). An N6-succinyllysine mark is found at Lys-311, Lys-347, and Lys-550. The gamma-glutamyl phosphate reductase stretch occupies residues 362–795 (TVEQQGEMAR…NLPVPQRNFS (434 aa)).

It in the N-terminal section; belongs to the glutamate 5-kinase family. In the C-terminal section; belongs to the gamma-glutamyl phosphate reductase family. As to quaternary structure, can form homodimers/multimers.

Its subcellular location is the mitochondrion matrix. The catalysed reaction is L-glutamate + ATP = L-glutamyl 5-phosphate + ADP. It catalyses the reaction L-glutamate 5-semialdehyde + phosphate + NADP(+) = L-glutamyl 5-phosphate + NADPH + H(+). It participates in amino-acid biosynthesis; L-proline biosynthesis; L-glutamate 5-semialdehyde from L-glutamate: step 1/2. Its pathway is amino-acid biosynthesis; L-proline biosynthesis; L-glutamate 5-semialdehyde from L-glutamate: step 2/2. With respect to regulation, isoform Short: Inhibited by L-ornithine with a Ki of approximately 0.25 mm. Isoform Long: Insensitive to ornithine inhibition. Thus, the two amino acid insert in the long isoform abolishes feedback inhibition of P5CS activity by L-ornithine. Its function is as follows. Bifunctional enzyme that converts glutamate to glutamate 5-semialdehyde, an intermediate in the biosynthesis of proline, ornithine and arginine. The sequence is that of Delta-1-pyrroline-5-carboxylate synthase (Aldh18a1) from Mus musculus (Mouse).